The following is a 469-amino-acid chain: Citrate synthase, mitochondrial (469 aa).

A mitochondrion-targeting transit peptide spans 1-30; the sequence is MSFLSVSRLAPKLLNSKNATYFLVAARNAS. Active-site residues include His-304 and His-350. Arg-359 contributes to the oxaloacetate binding site. The active site involves Asp-405. Arg-431 and Arg-451 together coordinate oxaloacetate.

It belongs to the citrate synthase family. In terms of assembly, homodimer.

It localises to the mitochondrion matrix. It carries out the reaction oxaloacetate + acetyl-CoA + H2O = citrate + CoA + H(+). Its pathway is carbohydrate metabolism; tricarboxylic acid cycle; isocitrate from oxaloacetate: step 1/2. In terms of biological role, key enzyme of the Krebs tricarboxylic acid cycle which catalyzes the synthesis of citrate from acetyl coenzyme A and oxaloacetate. The protein is Citrate synthase, mitochondrial (cs) of Katsuwonus pelamis (Skipjack tuna).